A 72-amino-acid polypeptide reads, in one-letter code: Cell division protein ZapB (72 aa).

A coiled-coil region spans residues Met1 to Asn71. The tract at residues Leu36–His56 is disordered. Basic and acidic residues predominate over residues Leu44 to His56.

It belongs to the ZapB family. As to quaternary structure, homodimer. The ends of the coiled-coil dimer bind to each other, forming polymers. Interacts with FtsZ.

The protein localises to the cytoplasm. Non-essential, abundant cell division factor that is required for proper Z-ring formation. It is recruited early to the divisome by direct interaction with FtsZ, stimulating Z-ring assembly and thereby promoting cell division earlier in the cell cycle. Its recruitment to the Z-ring requires functional FtsA or ZipA. The chain is Cell division protein ZapB from Histophilus somni (strain 129Pt) (Haemophilus somnus).